A 335-amino-acid chain; its full sequence is CTD kinase subunit beta (335 aa).

2 Cyclin N-terminal domains span residues 26-151 (ILST…CFDF) and 158-241 (NYMV…LYMH). A disordered region spans residues 269–293 (KNSGRPQKPPQIDPHSSSLADEYRE).

This sequence belongs to the cyclin family. CTDK-I consists of three subunits, ctk1/lsk1, ctk2/lsc1 and ctk3 (also called alpha, beta and gamma). Interacts with ctk1/lsk1. This interaction is dependent on ctk1/lsk1 kinase activity.

The protein resides in the cytoplasm. The protein localises to the nucleus. Functionally, cyclin subunit of the CTDK-I complex, which hyperphosphorylates the C-terminal heptapeptide repeat domain (CTD) of the largest RNA polymerase II subunit. As part of the CTDK-I complex, involved in RNA polymerase II transcriptional elongation and pre-mRNA 3'-end processing. Together with ctk3, required for ctk1/lsk1 CTD kinase activation. Together with ctk1/lsk1, required for the regulation of cytokinesis by phosphorylating 'Ser-2' residues found in the heptad repeats of the CTD. The chain is CTD kinase subunit beta (lsc1) from Schizosaccharomyces pombe (strain 972 / ATCC 24843) (Fission yeast).